We begin with the raw amino-acid sequence, 331 residues long: Cytoskeleton protein RodZ (331 aa).

At 1-111 (MNTEATQDHQ…LGKRRKKRDG (111 aa)) the chain is on the cytoplasmic side. The region spanning 19 to 71 (LRHAREQLGLSQQAVAERLCLKVSTVRDIEDDKAPADLASTFLRGYIRSYARL) is the HTH cro/C1-type domain. The segment at residues 30–49 (QQAVAERLCLKVSTVRDIED) is a DNA-binding region (H-T-H motif). A helical; Signal-anchor for type II membrane protein membrane pass occupies residues 112-132 (WLMSFTWLVLFVVIGLSGAWW). Topologically, residues 133-331 (WQDHKAQQEE…TLNAESSPAQ (199 aa)) are periplasmic. Positions 146 to 166 (MADQSSAELNGGDANSQNVPL) are enriched in polar residues. The disordered stretch occupies residues 146–238 (MADQSSAELN…ASPLPTDQAN (93 aa)). 2 stretches are compositionally biased toward low complexity: residues 167–202 (DTSAPAAPTADSAANSAPTDTASAPTTSAPAQTPAD) and 216–234 (TAGTTPAAPATTPASPLPT).

The protein belongs to the RodZ family.

Its subcellular location is the cell inner membrane. Its function is as follows. Cytoskeletal protein that is involved in cell-shape control through regulation of the length of the long axis. This is Cytoskeleton protein RodZ from Klebsiella pneumoniae subsp. pneumoniae (strain ATCC 700721 / MGH 78578).